A 100-amino-acid polypeptide reads, in one-letter code: MEKLNALRKQKIRAVILLEAVVALAIFASIATLLLGQIQKNRQEEAKILQKEEVLRVAKMALQTGQNQVSINGVEIQVFSSEKGLEVYHGSEQLLAIKEP.

Residues 15–35 (VILLEAVVALAIFASIATLLL) traverse the membrane as a helical segment.

In terms of assembly, the transformation pili are flexible filaments, consisting mainly of the major pilin ComGC and smaller amounts of the minor pilins, including at least ComGD, ComGF and ComGG, and perhaps ComGE. Interacts with ComGD. Interacts with ComGF. Interacts with ComGG.

The protein localises to the cell membrane. Its subcellular location is the cell surface. Required for formation of the type IV-like pilus (T4P) that plays a role in transformation. Transformation pili are dynamically extended and retracted, perhaps thereby promoting DNA uptake and transformation. Involved in transformation. Required for DNA binding. The protein is Competence protein ComGE of Streptococcus pneumoniae (strain ATCC BAA-255 / R6).